Reading from the N-terminus, the 77-residue chain is Conotoxin VnMEKL-0111 (77 aa).

The N-terminal stretch at 1–19 (MEKLTILLLVAAVLMSTQA) is a signal peptide. Residues 20-46 (LIQHDGEKSQKAKMKFLTARTLSAKTR) constitute a propeptide that is removed on maturation. Disulfide bonds link Cys-50–Cys-66, Cys-57–Cys-71, and Cys-65–Cys-75.

Belongs to the conotoxin O2 superfamily. In terms of tissue distribution, expressed by the venom duct.

Its subcellular location is the secreted. In Conus ventricosus (Mediterranean cone), this protein is Conotoxin VnMEKL-0111.